A 279-amino-acid polypeptide reads, in one-letter code: GTP cyclohydrolase MptA (279 aa).

Belongs to the GTP cyclohydrolase IV family. In terms of assembly, homodimer. Requires Fe(2+) as cofactor.

The catalysed reaction is GTP + H2O = 7,8-dihydroneopterin 2',3'-cyclic phosphate + formate + diphosphate + H(+). Its pathway is cofactor biosynthesis; 5,6,7,8-tetrahydromethanopterin biosynthesis. In terms of biological role, converts GTP to 7,8-dihydro-D-neopterin 2',3'-cyclic phosphate, the first intermediate in the biosynthesis of coenzyme methanopterin. This is GTP cyclohydrolase MptA from Korarchaeum cryptofilum (strain OPF8).